A 389-amino-acid chain; its full sequence is Tubulin-like protein CetZ3 (389 aa).

GTP contacts are provided by residues 10–14, 110–112, glutamate 142, asparagine 169, and asparagine 187; these read QAGGK and GTG.

Belongs to the CetZ family.

The protein localises to the cytoplasm. In terms of biological role, involved in cell shape control. This Haloferax volcanii (strain ATCC 29605 / DSM 3757 / JCM 8879 / NBRC 14742 / NCIMB 2012 / VKM B-1768 / DS2) (Halobacterium volcanii) protein is Tubulin-like protein CetZ3.